A 414-amino-acid chain; its full sequence is Glucose-1-phosphate adenylyltransferase (414 aa).

Residues Tyr99, Gly164, 181 to 182 (EK), and Ser199 each bind alpha-D-glucose 1-phosphate.

Belongs to the bacterial/plant glucose-1-phosphate adenylyltransferase family. Homotetramer.

It catalyses the reaction alpha-D-glucose 1-phosphate + ATP + H(+) = ADP-alpha-D-glucose + diphosphate. It functions in the pathway glycan biosynthesis; glycogen biosynthesis. In terms of biological role, involved in the biosynthesis of ADP-glucose, a building block required for the elongation reactions to produce glycogen. Catalyzes the reaction between ATP and alpha-D-glucose 1-phosphate (G1P) to produce pyrophosphate and ADP-Glc. The chain is Glucose-1-phosphate adenylyltransferase from Bifidobacterium longum (strain DJO10A).